The primary structure comprises 558 residues: Biotin biosynthesis bifunctional protein BioHC (558 aa).

The carboxylesterase stretch occupies residues M1 to I287. Substrate-binding positions include W56, S115–L116, and F182–Q186. S115 serves as the catalytic Nucleophile. Residues D246 and H274 contribute to the active site. H274 contacts substrate. Positions M288–V558 are malonyl-ACP O-methyltransferase.

In the N-terminal section; belongs to the AB hydrolase superfamily. Carboxylesterase BioH family. It in the C-terminal section; belongs to the methyltransferase superfamily.

The catalysed reaction is a carboxylic ester + H2O = an alcohol + a carboxylate + H(+). It catalyses the reaction malonyl-[ACP] + S-adenosyl-L-methionine = malonyl-[ACP] methyl ester + S-adenosyl-L-homocysteine. Its pathway is cofactor biosynthesis; biotin biosynthesis. Its function is as follows. Converts the free carboxyl group of a malonyl-thioester to its methyl ester by transfer of a methyl group from S-adenosyl-L-methionine (SAM). It allows to synthesize pimeloyl-ACP via the fatty acid synthetic pathway. In terms of biological role, the physiological role of BioH is to remove the methyl group introduced by BioC when the pimeloyl moiety is complete. It allows to synthesize pimeloyl-ACP via the fatty acid synthetic pathway through the hydrolysis of the ester bonds of pimeloyl-ACP esters. The protein is Biotin biosynthesis bifunctional protein BioHC (bioC) of Saccharophagus degradans (strain 2-40 / ATCC 43961 / DSM 17024).